Reading from the N-terminus, the 278-residue chain is MPELPEVRVVCKSLNEKVQNLVFKKVEIFNPKLFKEYDPSYFQEFLIGEKILKISNLGKNIIYFLTNNKIMLSHLRMEGKYSFYEQKPKETLKHIQAIFYFENGSELHYRESRPFGTFHIRYLNNYLKIDPLAKVAQSPGEIDFETFYNRLSKKALAIKPTLLDQSIVSGIGNIYADEILFASKIHPATPSNLLSKDKVKEILKNAIEILDKSTELGGSSINSYESLNKKEGQYQNFLKVHTKKGEFCIKCSSKIEKIKFKGRGTYFCPTCQKQKDFI.

P2 serves as the catalytic Schiff-base intermediate with DNA. E3 (proton donor) is an active-site residue. K59 serves as the catalytic Proton donor; for beta-elimination activity. Residues H94, R113, and K154 each contribute to the DNA site. The segment at 239–273 (KVHTKKGEFCIKCSSKIEKIKFKGRGTYFCPTCQK) adopts an FPG-type zinc-finger fold. R263 serves as the catalytic Proton donor; for delta-elimination activity.

This sequence belongs to the FPG family. As to quaternary structure, monomer. Zn(2+) serves as cofactor.

The catalysed reaction is Hydrolysis of DNA containing ring-opened 7-methylguanine residues, releasing 2,6-diamino-4-hydroxy-5-(N-methyl)formamidopyrimidine.. The enzyme catalyses 2'-deoxyribonucleotide-(2'-deoxyribose 5'-phosphate)-2'-deoxyribonucleotide-DNA = a 3'-end 2'-deoxyribonucleotide-(2,3-dehydro-2,3-deoxyribose 5'-phosphate)-DNA + a 5'-end 5'-phospho-2'-deoxyribonucleoside-DNA + H(+). Functionally, involved in base excision repair of DNA damaged by oxidation or by mutagenic agents. Acts as a DNA glycosylase that recognizes and removes damaged bases. Has a preference for oxidized purines, such as 7,8-dihydro-8-oxoguanine (8-oxoG). Has AP (apurinic/apyrimidinic) lyase activity and introduces nicks in the DNA strand. Cleaves the DNA backbone by beta-delta elimination to generate a single-strand break at the site of the removed base with both 3'- and 5'-phosphates. This Mycoplasmopsis pulmonis (strain UAB CTIP) (Mycoplasma pulmonis) protein is Formamidopyrimidine-DNA glycosylase (mutM).